The primary structure comprises 345 residues: Phosphoribosylformylglycinamidine cyclo-ligase (345 aa).

This sequence belongs to the AIR synthase family.

It localises to the cytoplasm. It catalyses the reaction 2-formamido-N(1)-(5-O-phospho-beta-D-ribosyl)acetamidine + ATP = 5-amino-1-(5-phospho-beta-D-ribosyl)imidazole + ADP + phosphate + H(+). It functions in the pathway purine metabolism; IMP biosynthesis via de novo pathway; 5-amino-1-(5-phospho-D-ribosyl)imidazole from N(2)-formyl-N(1)-(5-phospho-D-ribosyl)glycinamide: step 2/2. This is Phosphoribosylformylglycinamidine cyclo-ligase from Escherichia coli (strain K12 / MC4100 / BW2952).